The chain runs to 323 residues: Serine acetyltransferase 2 (323 aa).

A disordered region spans residues 302 to 323 (AQSNGPSLSAGDTEKGHTNSTS). Positions 313 to 323 (DTEKGHTNSTS) are enriched in basic and acidic residues.

It belongs to the transferase hexapeptide repeat family. In terms of assembly, homomultimer. Ubiquitously expressed at low levels. Localized in vascular tissues, particularly in phloem.

The protein localises to the cytoplasm. It catalyses the reaction L-serine + acetyl-CoA = O-acetyl-L-serine + CoA. The protein operates within amino-acid biosynthesis; L-cysteine biosynthesis; L-cysteine from L-serine: step 1/2. This chain is Serine acetyltransferase 2, found in Arabidopsis thaliana (Mouse-ear cress).